The following is a 239-amino-acid chain: MQRGDGRNFNQLRPITITPGFQSFAEGSVLIEQGKTRVICSVSMEDKVPQFLRNSGTGWVTAEYSMLPRSTVTRTQRDSSAGKISGRSQEIQRLIGRSLRSCVDLAALGERSFIIDCDVIQADAGTRTASITGAYIALYLAFKKMVDMGILSKMPFTSQVAAVSVSIFKGNIVLDPCYDEDFQAEVDFNLVMNDRAEFVEIQGTAEGKTFSRDTLDQVLKLGEAGIWQLFDIQNSITRP.

Phosphate contacts are provided by residues Arg-87 and 125–127 (GTR).

This sequence belongs to the RNase PH family. As to quaternary structure, homohexameric ring arranged as a trimer of dimers.

It carries out the reaction tRNA(n+1) + phosphate = tRNA(n) + a ribonucleoside 5'-diphosphate. In terms of biological role, phosphorolytic 3'-5' exoribonuclease that plays an important role in tRNA 3'-end maturation. Removes nucleotide residues following the 3'-CCA terminus of tRNAs; can also add nucleotides to the ends of RNA molecules by using nucleoside diphosphates as substrates, but this may not be physiologically important. Probably plays a role in initiation of 16S rRNA degradation (leading to ribosome degradation) during starvation. The polypeptide is Ribonuclease PH (Dehalococcoides mccartyi (strain ATCC BAA-2266 / KCTC 15142 / 195) (Dehalococcoides ethenogenes (strain 195))).